Reading from the N-terminus, the 1433-residue chain is DNA-directed RNA polymerase subunit beta' (1433 aa).

Residues cysteine 66, cysteine 68, cysteine 81, and cysteine 84 each contribute to the Zn(2+) site. 3 residues coordinate Mg(2+): aspartate 473, aspartate 475, and aspartate 477. Cysteine 815, cysteine 889, cysteine 896, and cysteine 899 together coordinate Zn(2+).

This sequence belongs to the RNA polymerase beta' chain family. The RNAP catalytic core consists of 2 alpha, 1 beta, 1 beta' and 1 omega subunit. When a sigma factor is associated with the core the holoenzyme is formed, which can initiate transcription. Requires Mg(2+) as cofactor. Zn(2+) serves as cofactor.

The catalysed reaction is RNA(n) + a ribonucleoside 5'-triphosphate = RNA(n+1) + diphosphate. Functionally, DNA-dependent RNA polymerase catalyzes the transcription of DNA into RNA using the four ribonucleoside triphosphates as substrates. The chain is DNA-directed RNA polymerase subunit beta' from Porphyromonas gingivalis (strain ATCC 33277 / DSM 20709 / CIP 103683 / JCM 12257 / NCTC 11834 / 2561).